The chain runs to 243 residues: Adenosylcobinamide-GDP ribazoletransferase (243 aa).

The next 5 membrane-spanning stretches (helical) occupy residues 31–51 (LLWY…AHLL), 61–81 (AAII…DGLA), 109–129 (IAVV…LSLL), 134–154 (GIYL…LLAT), and 188–208 (LLLG…FVWL).

It belongs to the CobS family. Requires Mg(2+) as cofactor.

The protein resides in the cell inner membrane. It carries out the reaction alpha-ribazole + adenosylcob(III)inamide-GDP = adenosylcob(III)alamin + GMP + H(+). It catalyses the reaction alpha-ribazole 5'-phosphate + adenosylcob(III)inamide-GDP = adenosylcob(III)alamin 5'-phosphate + GMP + H(+). It participates in cofactor biosynthesis; adenosylcobalamin biosynthesis; adenosylcobalamin from cob(II)yrinate a,c-diamide: step 7/7. Its function is as follows. Joins adenosylcobinamide-GDP and alpha-ribazole to generate adenosylcobalamin (Ado-cobalamin). Also synthesizes adenosylcobalamin 5'-phosphate from adenosylcobinamide-GDP and alpha-ribazole 5'-phosphate. The polypeptide is Adenosylcobinamide-GDP ribazoletransferase (Ectopseudomonas mendocina (strain ymp) (Pseudomonas mendocina)).